The chain runs to 662 residues: Serine/threonine-protein kinase PTK1/STK1 (662 aa).

The tract at residues glycine 35–serine 119 is disordered. Low complexity predominate over residues serine 50–serine 60. 2 stretches are compositionally biased toward polar residues: residues proline 61–threonine 91 and glycine 98–serine 119. In terms of domain architecture, Protein kinase spans aspartate 196 to phenylalanine 503. ATP is bound by residues isoleucine 202–valine 210 and lysine 226. The active-site Proton acceptor is the aspartate 329. Residues threonine 605 to histidine 631 are disordered.

It belongs to the protein kinase superfamily. Ser/Thr protein kinase family.

The catalysed reaction is L-seryl-[protein] + ATP = O-phospho-L-seryl-[protein] + ADP + H(+). It carries out the reaction L-threonyl-[protein] + ATP = O-phospho-L-threonyl-[protein] + ADP + H(+). Essential determinant for low-affinity spermidine transport. This is Serine/threonine-protein kinase PTK1/STK1 (PTK1) from Saccharomyces cerevisiae (strain ATCC 204508 / S288c) (Baker's yeast).